A 139-amino-acid polypeptide reads, in one-letter code: Large-conductance mechanosensitive channel (139 aa).

The next 2 helical transmembrane spans lie at 17 to 37 (VVDM…VTSL) and 88 to 108 (TVDF…IMAA).

This sequence belongs to the MscL family. As to quaternary structure, homopentamer.

Its subcellular location is the cell inner membrane. Channel that opens in response to stretch forces in the membrane lipid bilayer. May participate in the regulation of osmotic pressure changes within the cell. The protein is Large-conductance mechanosensitive channel of Porphyromonas gingivalis (strain ATCC 33277 / DSM 20709 / CIP 103683 / JCM 12257 / NCTC 11834 / 2561).